The sequence spans 517 residues: Probable bifunctional methylthioribulose-1-phosphate dehydratase/enolase-phosphatase E1 (517 aa).

The tract at residues 1–242 is methylthioribulose-1-phosphate dehydratase; it reads MACGGCSCEA…CIKLYQLGID (242 aa). A substrate-binding site is contributed by Cys-114. 2 residues coordinate Zn(2+): His-132 and His-134. Glu-157 (proton donor/acceptor; for methylthioribulose-1-phosphate dehydratase activity) is an active-site residue. His-207 contributes to the Zn(2+) binding site. The segment at 278–517 is enolase-phosphatase E1; that stretch reads VVLDIEGTTT…FRTIKSFSEI (240 aa). Mg(2+) contacts are provided by Asp-281 and Glu-283. Substrate-binding positions include 416 to 417 and Lys-450; that span reads SS. Asp-476 contacts Mg(2+).

The protein in the N-terminal section; belongs to the aldolase class II family. MtnB subfamily. In the C-terminal section; belongs to the HAD-like hydrolase superfamily. MasA/MtnC family. Zn(2+) serves as cofactor. It depends on Mg(2+) as a cofactor.

The enzyme catalyses 5-(methylsulfanyl)-D-ribulose 1-phosphate = 5-methylsulfanyl-2,3-dioxopentyl phosphate + H2O. The catalysed reaction is 5-methylsulfanyl-2,3-dioxopentyl phosphate + H2O = 1,2-dihydroxy-5-(methylsulfanyl)pent-1-en-3-one + phosphate. It participates in amino-acid biosynthesis; L-methionine biosynthesis via salvage pathway; L-methionine from S-methyl-5-thio-alpha-D-ribose 1-phosphate: step 2/6. Its pathway is amino-acid biosynthesis; L-methionine biosynthesis via salvage pathway; L-methionine from S-methyl-5-thio-alpha-D-ribose 1-phosphate: step 3/6. The protein operates within amino-acid biosynthesis; L-methionine biosynthesis via salvage pathway; L-methionine from S-methyl-5-thio-alpha-D-ribose 1-phosphate: step 4/6. In Sorghum bicolor (Sorghum), this protein is Probable bifunctional methylthioribulose-1-phosphate dehydratase/enolase-phosphatase E1.